Here is a 337-residue protein sequence, read N- to C-terminus: Carbonic anhydrase 14 (337 aa).

A signal peptide spans 1-15 (MLFSALLLEVIWILA). The Extracellular portion of the chain corresponds to 16–290 (ADGGQHWTYE…AGSSYTTGEM (275 aa)). The Alpha-carbonic anhydrase domain occupies 20-278 (QHWTYEGPHG…LNQRMVFASF (259 aa)). Cys-40 and Cys-221 are oxidised to a cystine. Catalysis depends on His-84, which acts as the Proton donor/acceptor. Residues His-109, His-111, and His-135 each contribute to the Zn(2+) site. An N-linked (GlcNAc...) asparagine glycan is attached at Asn-213. 217-218 (TT) provides a ligand contact to substrate. The helical transmembrane segment at 291-311 (LSLGVGILVGCLCLLLAVYFI) threads the bilayer. Topologically, residues 312–337 (ARKIRKKRLENRKSVVFTSAQATTEA) are cytoplasmic. A Phosphoserine modification is found at Ser-325.

The protein belongs to the alpha-carbonic anhydrase family. Requires Zn(2+) as cofactor. High expression in all parts of the central nervous system and lower expression in adult liver, heart, small intestine, colon, kidney, urinary bladder and skeletal muscle.

The protein localises to the membrane. It carries out the reaction hydrogencarbonate + H(+) = CO2 + H2O. Its activity is regulated as follows. Activated by histamine, L-adrenaline, L- and D-histidine, and L- and D-phenylalanine. Inhibited by coumarins, saccharin, sulfonamide derivatives such as acetazolamide (AZA) and Foscarnet (phosphonoformate trisodium salt). Its function is as follows. Reversible hydration of carbon dioxide. In Homo sapiens (Human), this protein is Carbonic anhydrase 14 (CA14).